The chain runs to 671 residues: tRNA 5-methylaminomethyl-2-thiouridine biosynthesis bifunctional protein MnmC (671 aa).

A tRNA (mnm(5)s(2)U34)-methyltransferase region spans residues 1-245 (MVNVMNTLSF…KREMLWGEKP (245 aa)). The FAD-dependent cmnm(5)s(2)U34 oxidoreductase stretch occupies residues 272 to 671 (VGGGVASLFV…RKLLKGSKVE (400 aa)).

In the N-terminal section; belongs to the methyltransferase superfamily. tRNA (mnm(5)s(2)U34)-methyltransferase family. The protein in the C-terminal section; belongs to the DAO family. FAD is required as a cofactor.

It is found in the cytoplasm. It carries out the reaction 5-aminomethyl-2-thiouridine(34) in tRNA + S-adenosyl-L-methionine = 5-methylaminomethyl-2-thiouridine(34) in tRNA + S-adenosyl-L-homocysteine + H(+). In terms of biological role, catalyzes the last two steps in the biosynthesis of 5-methylaminomethyl-2-thiouridine (mnm(5)s(2)U) at the wobble position (U34) in tRNA. Catalyzes the FAD-dependent demodification of cmnm(5)s(2)U34 to nm(5)s(2)U34, followed by the transfer of a methyl group from S-adenosyl-L-methionine to nm(5)s(2)U34, to form mnm(5)s(2)U34. This is tRNA 5-methylaminomethyl-2-thiouridine biosynthesis bifunctional protein MnmC from Actinobacillus pleuropneumoniae serotype 3 (strain JL03).